The chain runs to 158 residues: Endoribonuclease YbeY (158 aa).

Zn(2+)-binding residues include His-120, His-124, and His-130.

It belongs to the endoribonuclease YbeY family. The cofactor is Zn(2+).

It localises to the cytoplasm. Functionally, single strand-specific metallo-endoribonuclease involved in late-stage 70S ribosome quality control and in maturation of the 3' terminus of the 16S rRNA. The sequence is that of Endoribonuclease YbeY from Spiroplasma citri.